A 292-amino-acid polypeptide reads, in one-letter code: Ribosomal RNA small subunit methyltransferase A (292 aa).

Residues Asn29, Leu31, Gly56, Glu77, Asp102, and Asn127 each contribute to the S-adenosyl-L-methionine site.

Belongs to the class I-like SAM-binding methyltransferase superfamily. rRNA adenine N(6)-methyltransferase family. RsmA subfamily.

The protein localises to the cytoplasm. The enzyme catalyses adenosine(1518)/adenosine(1519) in 16S rRNA + 4 S-adenosyl-L-methionine = N(6)-dimethyladenosine(1518)/N(6)-dimethyladenosine(1519) in 16S rRNA + 4 S-adenosyl-L-homocysteine + 4 H(+). Specifically dimethylates two adjacent adenosines (A1518 and A1519) in the loop of a conserved hairpin near the 3'-end of 16S rRNA in the 30S particle. May play a critical role in biogenesis of 30S subunits. The chain is Ribosomal RNA small subunit methyltransferase A from Bacillus licheniformis (strain ATCC 14580 / DSM 13 / JCM 2505 / CCUG 7422 / NBRC 12200 / NCIMB 9375 / NCTC 10341 / NRRL NRS-1264 / Gibson 46).